We begin with the raw amino-acid sequence, 373 residues long: Alanine racemase (373 aa).

K40 functions as the Proton acceptor; specific for D-alanine in the catalytic mechanism. An N6-(pyridoxal phosphate)lysine modification is found at K40. R140 contacts substrate. The active-site Proton acceptor; specific for L-alanine is the Y268. Position 315 (M315) interacts with substrate.

The protein belongs to the alanine racemase family. Pyridoxal 5'-phosphate is required as a cofactor.

The catalysed reaction is L-alanine = D-alanine. It participates in amino-acid biosynthesis; D-alanine biosynthesis; D-alanine from L-alanine: step 1/1. Catalyzes the interconversion of L-alanine and D-alanine. May also act on other amino acids. The protein is Alanine racemase (alr) of Levilactobacillus brevis (strain ATCC 367 / BCRC 12310 / CIP 105137 / JCM 1170 / LMG 11437 / NCIMB 947 / NCTC 947) (Lactobacillus brevis).